Consider the following 123-residue polypeptide: Large ribosomal subunit protein uL14 (123 aa).

It belongs to the universal ribosomal protein uL14 family. In terms of assembly, part of the 50S ribosomal subunit. Forms a cluster with proteins L3 and L19. In the 70S ribosome, L14 and L19 interact and together make contacts with the 16S rRNA in bridges B5 and B8.

Binds to 23S rRNA. Forms part of two intersubunit bridges in the 70S ribosome. The chain is Large ribosomal subunit protein uL14 from Escherichia coli O139:H28 (strain E24377A / ETEC).